Consider the following 159-residue polypeptide: Keratin-associated protein 6-2 (159 aa).

Residues 11–147 (GYGCGYGSGY…SYYRSGCCGY (137 aa)) are 66 X 2 AA repeats of G-[YCGS].

The protein belongs to the KRTAP type 6 family. In terms of assembly, interacts with hair keratins. In terms of tissue distribution, expressed in skin during two hair growth cycles. Expression restricted to the cortical cells of hair follicles, appearing first in the cortical cells processing the flat nuclei located a few cells above the dermal papilla.

In the hair cortex, hair keratin intermediate filaments are embedded in an interfilamentous matrix, consisting of hair keratin-associated proteins (KRTAP), which are essential for the formation of a rigid and resistant hair shaft through their extensive disulfide bond cross-linking with abundant cysteine residues of hair keratins. The matrix proteins include the high-sulfur and high-glycine-tyrosine keratins. This is Keratin-associated protein 6-2 from Mus musculus (Mouse).